The following is a 237-amino-acid chain: Probable aquaporin SIP2-1 (237 aa).

The next 6 helical transmembrane spans lie at Phe-15–Ser-35, Pro-39–Leu-59, Leu-71–Val-91, Val-122–Ser-142, Ile-169–Tyr-189, and Val-202–Phe-222. Positions Asn-69–Leu-71 match the NPA 1 motif. The short motif at Asn-180–Ala-182 is the NPA 2 element.

The protein belongs to the MIP/aquaporin (TC 1.A.8) family. SIP (TC 1.A.8.10) subfamily. As to expression, expressed in dividing cells and elongating regions of the root tips, emerging lateral roots, root steles, cotyledons, main veins of the rosette leaves, vascular tissues of the flower petals, stigma, stamens (anthers and filaments), pollen and the top and bottom (receptacle) of siliques.

It localises to the endoplasmic reticulum membrane. Its function is as follows. Water channel required to facilitate the transport of water across cell membrane. Inactive in yeast cells. The protein is Probable aquaporin SIP2-1 (SIP2-1) of Arabidopsis thaliana (Mouse-ear cress).